The sequence spans 261 residues: Thiamine thiazole synthase (261 aa).

NAD(+) contacts are provided by residues Ser40, 59–60 (ER), Gly67, Val133, and 159–161 (HID). Fe cation-binding residues include Asp161 and His176. Residues Ser179 and Met226 each contribute to the NAD(+) site. Arg236 serves as a coordination point for glycine.

It belongs to the THI4 family. Homooctamer; tetramer of dimers. Requires Fe(2+) as cofactor.

The catalysed reaction is hydrogen sulfide + glycine + NAD(+) = ADP-5-ethyl-4-methylthiazole-2-carboxylate + nicotinamide + 3 H2O + H(+). Its pathway is cofactor biosynthesis; thiamine diphosphate biosynthesis. Functionally, involved in the biosynthesis of the thiazole moiety of thiamine. Catalyzes the conversion of NAD and glycine to adenosine diphosphate 5-(2-hydroxyethyl)-4-methylthiazole-2-carboxylate (ADT), an adenylated thiazole intermediate, using free sulfide as a source of sulfur. This chain is Thiamine thiazole synthase, found in Methanococcus maripaludis (strain C6 / ATCC BAA-1332).